The primary structure comprises 733 residues: Hypermethylated in cancer 1 protein (733 aa).

The 64-residue stretch at 47–110 (CDVIIVVQNA…IYTGRLTDSV (64 aa)) folds into the BTB domain. The mediates HDAC-dependent transcriptional repression stretch occupies residues 154-315 (KYCHLRGGGS…PFRGSGGSPG (162 aa)). Position 159 is an omega-N-methylarginine (arginine 159). The disordered stretch occupies residues 189 to 209 (YSSPAGPPPPPAAEPPSGPDA). Residues 193–206 (AGPPPPPAAEPPSG) show a composition bias toward pro residues. Position 237 is a phosphoserine (serine 237). Residues 241–247 (GLDLSKK) form an interaction with CTBP1 region. The tract at residues 241–421 (GLDLSKKSPP…PGGHLEGYPC (181 aa)) is disordered. Serine 248 bears the Phosphoserine mark. At lysine 333 the chain carries N6-acetyllysine; alternate. Residue lysine 333 forms a Glycyl lysine isopeptide (Lys-Gly) (interchain with G-Cter in SUMO); alternate linkage. The segment covering 344–361 (ELVRDRGSPGERLEERGG) has biased composition (basic and acidic residues). Serine 366 bears the Phosphoserine mark. The segment covering 368–380 (GGPPLGLVPPPRY) has biased composition (pro residues). C2H2-type zinc fingers lie at residues 437–464 (YVCI…EEEE), 507–534 (YRCA…LTRP), 535–562 (YPCT…GLKP), 563–590 (FACD…GEKP), and 591–618 (YECQ…VGGA). Residue serine 704 is modified to Phosphoserine.

This sequence belongs to the krueppel C2H2-type zinc-finger protein family. Hic subfamily. In terms of assembly, self-associates. Interacts with HIC2. Interacts with CTBP1 and CTBP2. Interacts with TCF7L2 and ARID1A. Interacts with MTA1 and MBD3; indicative for an association with the NuRD complex. Interacts with SIRT1. Acetylated on several residues, including Lys-333. Lys-333 is deacetylated by SIRT1. Post-translationally, sumoylated on Lys-333 by a PIAS family member, which enhances interaction with MTA1, positively regulates transcriptional repression activity and is enhanced by HDAC4. Ubiquitously expressed with highest levels in heart and lung.

The protein localises to the nucleus. Transcriptional repressor. Recognizes and binds to the consensus sequence '5-[CG]NG[CG]GGGCA[CA]CC-3'. May act as a tumor suppressor. Involved in development of head, face, limbs and ventral body wall. Involved in down-regulation of SIRT1 and thereby is involved in regulation of p53/TP53-dependent apoptotic DNA-damage responses. The specific target gene promoter association seems to be depend on corepressors, such as CTBP1 or CTBP2 and MTA1. In cooperation with MTA1 (indicative for an association with the NuRD complex) represses transcription from CCND1/cyclin-D1 and CDKN1C/p57Kip2 specifically in quiescent cells. Involved in regulation of the Wnt signaling pathway probably by association with TCF7L2 and preventing TCF7L2 and CTNNB1 association with promoters of TCF-responsive genes. Seems to repress transcription from E2F1 and ATOH1 which involves ARID1A, indicative for the participation of a distinct SWI/SNF-type chromatin-remodeling complex. Probably represses transcription from ACKR3, FGFBP1 and EFNA1. This Mus musculus (Mouse) protein is Hypermethylated in cancer 1 protein (Hic1).